The chain runs to 530 residues: NADH-quinone oxidoreductase subunit C/D (530 aa).

Positions 1 to 144 (MEEIKYIEPA…NPLRMDNEET (144 aa)) are NADH dehydrogenase I subunit C. The NADH dehydrogenase I subunit D stretch occupies residues 171–530 (EYVVNIGPQH…LDYVVPDIDR (360 aa)).

This sequence in the N-terminal section; belongs to the complex I 30 kDa subunit family. It in the C-terminal section; belongs to the complex I 49 kDa subunit family. NDH-1 is composed of 13 different subunits. Subunits NuoB, CD, E, F, and G constitute the peripheral sector of the complex.

The protein resides in the cell inner membrane. The enzyme catalyses a quinone + NADH + 5 H(+)(in) = a quinol + NAD(+) + 4 H(+)(out). In terms of biological role, NDH-1 shuttles electrons from NADH, via FMN and iron-sulfur (Fe-S) centers, to quinones in the respiratory chain. The immediate electron acceptor for the enzyme in this species is believed to be a menaquinone. Couples the redox reaction to proton translocation (for every two electrons transferred, four hydrogen ions are translocated across the cytoplasmic membrane), and thus conserves the redox energy in a proton gradient. This is NADH-quinone oxidoreductase subunit C/D from Bacteroides fragilis (strain ATCC 25285 / DSM 2151 / CCUG 4856 / JCM 11019 / LMG 10263 / NCTC 9343 / Onslow / VPI 2553 / EN-2).